The primary structure comprises 329 residues: Phospho-N-acetylmuramoyl-pentapeptide-transferase (329 aa).

9 helical membrane-spanning segments follow: residues 1 to 21, 53 to 73, 76 to 96, 109 to 129, 141 to 161, 175 to 195, 198 to 218, 237 to 257, and 309 to 329; these read MLLN…IGIP, MGGF…ALVF, FSPA…IGFL, GLTA…SYFI, ILSW…IWLV, GLAS…AVVH, YDVL…FVFN, FLAI…IGAV, and IVFW…YFAF.

This sequence belongs to the glycosyltransferase 4 family. MraY subfamily. Mg(2+) serves as cofactor.

It localises to the cell membrane. It carries out the reaction UDP-N-acetyl-alpha-D-muramoyl-L-alanyl-gamma-D-glutamyl-L-lysyl-D-alanyl-D-alanine + di-trans,octa-cis-undecaprenyl phosphate = Mur2Ac(oyl-L-Ala-gamma-D-Glu-L-Lys-D-Ala-D-Ala)-di-trans,octa-cis-undecaprenyl diphosphate + UMP. The protein operates within cell wall biogenesis; peptidoglycan biosynthesis. Functionally, catalyzes the initial step of the lipid cycle reactions in the biosynthesis of the cell wall peptidoglycan: transfers peptidoglycan precursor phospho-MurNAc-pentapeptide from UDP-MurNAc-pentapeptide onto the lipid carrier undecaprenyl phosphate, yielding undecaprenyl-pyrophosphoryl-MurNAc-pentapeptide, known as lipid I. This chain is Phospho-N-acetylmuramoyl-pentapeptide-transferase, found in Lactococcus lactis subsp. cremoris (strain SK11).